A 642-amino-acid polypeptide reads, in one-letter code: Threonine--tRNA ligase (642 aa).

The 61-residue stretch at 1–61 (MPVITLPDGS…VDDASVAIIT (61 aa)) folds into the TGS domain. The tract at residues 243-534 (DHRKIGKQLD…LTEEYAGFFP (292 aa)) is catalytic. 3 residues coordinate Zn(2+): Cys334, His385, and His511.

Belongs to the class-II aminoacyl-tRNA synthetase family. Homodimer. It depends on Zn(2+) as a cofactor.

The protein localises to the cytoplasm. It catalyses the reaction tRNA(Thr) + L-threonine + ATP = L-threonyl-tRNA(Thr) + AMP + diphosphate + H(+). In terms of biological role, catalyzes the attachment of threonine to tRNA(Thr) in a two-step reaction: L-threonine is first activated by ATP to form Thr-AMP and then transferred to the acceptor end of tRNA(Thr). Also edits incorrectly charged L-seryl-tRNA(Thr). In Erwinia tasmaniensis (strain DSM 17950 / CFBP 7177 / CIP 109463 / NCPPB 4357 / Et1/99), this protein is Threonine--tRNA ligase.